Consider the following 278-residue polypeptide: Complement C1q tumor necrosis factor-related protein 6 (278 aa).

A signal peptide spans M1–L46. A glycan (N-linked (GlcNAc...) asparagine) is linked at N91. The region spanning G97–P138 is the Collagen-like domain. Residues K99–P135 are disordered. Residues C139–S259 form the C1q domain.

The protein localises to the secreted. The sequence is that of Complement C1q tumor necrosis factor-related protein 6 (C1QTNF6) from Homo sapiens (Human).